Here is a 251-residue protein sequence, read N- to C-terminus: Ubiquinone/menaquinone biosynthesis C-methyltransferase UbiE (251 aa).

Residues Thr74, Asp95, and 123–124 each bind S-adenosyl-L-methionine; that span reads NA.

It belongs to the class I-like SAM-binding methyltransferase superfamily. MenG/UbiE family.

It catalyses the reaction a 2-demethylmenaquinol + S-adenosyl-L-methionine = a menaquinol + S-adenosyl-L-homocysteine + H(+). It carries out the reaction a 2-methoxy-6-(all-trans-polyprenyl)benzene-1,4-diol + S-adenosyl-L-methionine = a 5-methoxy-2-methyl-3-(all-trans-polyprenyl)benzene-1,4-diol + S-adenosyl-L-homocysteine + H(+). The protein operates within quinol/quinone metabolism; menaquinone biosynthesis; menaquinol from 1,4-dihydroxy-2-naphthoate: step 2/2. Its pathway is cofactor biosynthesis; ubiquinone biosynthesis. Its function is as follows. Methyltransferase required for the conversion of demethylmenaquinol (DMKH2) to menaquinol (MKH2) and the conversion of 2-polyprenyl-6-methoxy-1,4-benzoquinol (DDMQH2) to 2-polyprenyl-3-methyl-6-methoxy-1,4-benzoquinol (DMQH2). The sequence is that of Ubiquinone/menaquinone biosynthesis C-methyltransferase UbiE from Erwinia tasmaniensis (strain DSM 17950 / CFBP 7177 / CIP 109463 / NCPPB 4357 / Et1/99).